A 792-amino-acid polypeptide reads, in one-letter code: uncharacterized protein (792 aa).

25 repeat units span residues 91–102 (NSSTNATTTASI), 103–114 (NVRTSATTTASI), 115–126 (NVRTSATTTEST), 127–138 (NSNTNATTTEST), 139–150 (NSSTNATTTASI), 151–162 (NVRTSATTTEST), 163–174 (NSSTNATTTASI), 175–186 (NVRTSATTTEST), 187–198 (NSSTNATTTASI), 199–210 (NVRTSATTTEST), 211–222 (NSNTNASTNATT), 223–234 (NSSTNATTTAST), 235–246 (NVRTSATTNATT), 247–258 (NSSTNATTTAST), 259–270 (NVRTSATTTAST), 271–282 (NVRTSATTTASI), 283–294 (NVRTSATTTESI), 295–306 (NSSTNATTTEST), 307–318 (NSNTSATTTEST), 319–330 (DSNTNATTTASI), 331–342 (NVRTSATTTEST), 343–354 (NSNTSATTTEST), 355–366 (DSNTSATTTAST), 367–378 (NSSTNATTTAST), and 379–390 (NSSTNATTTEST). The interval 91–390 (NSSTNATTTA…STNATTTEST (300 aa)) is 25 X 12 AA tandem repeat of N-[SV]-[RS]-T-[NS]-A-T-T-T-[AE]-[ST]-[IT]. A disordered region spans residues 113-417 (SINVRTSATT…RFHPVTDINK (305 aa)). Residues 118–393 (TSATTTESTN…ATTTESTNAS (276 aa)) show a composition bias toward low complexity. The segment covering 394–417 (AKEDANKDGNAEDNRFHPVTDINK) has biased composition (basic and acidic residues).

This is an uncharacterized protein from Saccharomyces cerevisiae (strain ATCC 204508 / S288c) (Baker's yeast).